A 145-amino-acid polypeptide reads, in one-letter code: Large ribosomal subunit protein uL11 (145 aa).

Belongs to the universal ribosomal protein uL11 family. In terms of assembly, part of the ribosomal stalk of the 50S ribosomal subunit. Interacts with L10 and the large rRNA to form the base of the stalk. L10 forms an elongated spine to which L12 dimers bind in a sequential fashion forming a multimeric L10(L12)X complex. Post-translationally, one or more lysine residues are methylated.

Functionally, forms part of the ribosomal stalk which helps the ribosome interact with GTP-bound translation factors. The sequence is that of Large ribosomal subunit protein uL11 from Rickettsia typhi (strain ATCC VR-144 / Wilmington).